Reading from the N-terminus, the 92-residue chain is Signal recognition particle 19 kDa protein (92 aa).

It belongs to the SRP19 family. Part of the signal recognition particle protein translocation system, which is composed of SRP and FtsY. Archaeal SRP consists of a 7S RNA molecule of 300 nucleotides and two protein subunits: SRP54 and SRP19.

It is found in the cytoplasm. Functionally, involved in targeting and insertion of nascent membrane proteins into the cytoplasmic membrane. Binds directly to 7S RNA and mediates binding of the 54 kDa subunit of the SRP. This chain is Signal recognition particle 19 kDa protein, found in Haloferax volcanii (strain ATCC 29605 / DSM 3757 / JCM 8879 / NBRC 14742 / NCIMB 2012 / VKM B-1768 / DS2) (Halobacterium volcanii).